A 158-amino-acid chain; its full sequence is 18.1 kDa class I heat shock protein (158 aa).

Positions 44 to 158 (ENPAFVSTRV…AEVKSIEISG (115 aa)) constitute a sHSP domain.

This sequence belongs to the small heat shock protein (HSP20) family. As to quaternary structure, forms oligomeric structures.

It is found in the cytoplasm. The polypeptide is 18.1 kDa class I heat shock protein (HSP18.1) (Pisum sativum (Garden pea)).